Here is a 193-residue protein sequence, read N- to C-terminus: MEKKQSILSPIIRITFTFLVLCGLVYPLIVTGIAQAVMKDNADGSLIYNDKNEVIGSKLIGQNFTDPRYFQGRVSSIEYKAEASGSNNYAPSNPDLAKRVEKSIADWKEKNPAVPVTEIPIDLVTNSGSGLDPDISPKAASVQVDRISKLTNIPKEKLNQLIKDQTEGAALGLFGETRVNVLKLNLALQKLMK.

The chain crosses the membrane as a helical span at residues 14-34 (ITFTFLVLCGLVYPLIVTGIA).

This sequence belongs to the KdpC family. The system is composed of three essential subunits: KdpA, KdpB and KdpC.

Its subcellular location is the cell membrane. Part of the high-affinity ATP-driven potassium transport (or Kdp) system, which catalyzes the hydrolysis of ATP coupled with the electrogenic transport of potassium into the cytoplasm. This subunit acts as a catalytic chaperone that increases the ATP-binding affinity of the ATP-hydrolyzing subunit KdpB by the formation of a transient KdpB/KdpC/ATP ternary complex. This chain is Potassium-transporting ATPase KdpC subunit, found in Bacillus cereus (strain B4264).